Reading from the N-terminus, the 993-residue chain is Lateral signaling target protein 2 homolog (993 aa).

Disordered stretches follow at residues Asp340–Asp449, Asp494–Gln623, Gly759–Glu813, and Ala825–Trp902. Low complexity predominate over residues Asn343–Ser360. Polar residues predominate over residues Arg372–Val405. Residues Asp409–Thr448 show a composition bias toward acidic residues. Residues Ser525 and Ser526 each carry the phosphoserine modification. The span at Ser535–Gly549 shows a compositional bias: polar residues. Basic residues predominate over residues Ser559–Arg608. Low complexity predominate over residues Gly759–Ser801. At Ser808 the chain carries Phosphoserine. 2 stretches are compositionally biased toward low complexity: residues Ser842–Pro862 and Thr884–Thr896. The segment at Asp905 to Ile965 adopts an FYVE-type zinc-finger fold. Residues Cys911, Cys914, Cys927, Cys930, Cys935, Cys938, Cys957, and Cys960 each contribute to the Zn(2+) site. Positions Ser968–Ser993 are disordered. Polar residues predominate over residues Met978 to Ser993.

This sequence belongs to the lst-2 family.

Functionally, negative regulator of epidermal growth factor receptor (EGFR) signaling. This chain is Lateral signaling target protein 2 homolog, found in Drosophila willistoni (Fruit fly).